We begin with the raw amino-acid sequence, 155 residues long: Endoribonuclease YbeY (155 aa).

Residues His114, His118, and His124 each contribute to the Zn(2+) site.

It belongs to the endoribonuclease YbeY family. It depends on Zn(2+) as a cofactor.

The protein localises to the cytoplasm. Functionally, single strand-specific metallo-endoribonuclease involved in late-stage 70S ribosome quality control and in maturation of the 3' terminus of the 16S rRNA. The chain is Endoribonuclease YbeY from Enterobacter sp. (strain 638).